The chain runs to 153 residues: Arginine repressor (153 aa).

This sequence belongs to the ArgR family.

The protein localises to the cytoplasm. Its pathway is amino-acid biosynthesis; L-arginine biosynthesis [regulation]. Its function is as follows. Regulates arginine biosynthesis genes. This chain is Arginine repressor, found in Clostridium tetani (strain Massachusetts / E88).